The sequence spans 660 residues: GRIP and coiled-coil domain-containing protein 2 (660 aa).

A disordered region spans residues 1–28 (MSAPESSISPVPPPGSSSGGGKKLDSLP). Coiled-coil stretches lie at residues 30–92 (EDLV…VENN), 115–464 (EWKE…KAIA), and 517–596 (DEYR…EYLK). Positions 585 to 636 (ELSNEKNMEYLKNVFVQFLKPESVPAERDQLVIVLQRVLHLSPKEVEILKAA) constitute a GRIP domain.

This chain is GRIP and coiled-coil domain-containing protein 2, found in Caenorhabditis elegans.